Consider the following 636-residue polypeptide: tRNA uridine 5-carboxymethylaminomethyl modification enzyme MnmG (636 aa).

18 to 23 (GAGHAG) lines the FAD pocket. 281-295 (GPRYCPSIEDKIVRF) is a binding site for NAD(+).

Belongs to the MnmG family. As to quaternary structure, homodimer. Heterotetramer of two MnmE and two MnmG subunits. It depends on FAD as a cofactor.

The protein localises to the cytoplasm. Functionally, NAD-binding protein involved in the addition of a carboxymethylaminomethyl (cmnm) group at the wobble position (U34) of certain tRNAs, forming tRNA-cmnm(5)s(2)U34. In Lactiplantibacillus plantarum (strain ATCC BAA-793 / NCIMB 8826 / WCFS1) (Lactobacillus plantarum), this protein is tRNA uridine 5-carboxymethylaminomethyl modification enzyme MnmG.